The chain runs to 309 residues: NmrA-like family domain-containing protein 1 (309 aa).

NADP(+) contacts are provided by residues 11–16 (GATGAQ), 37–41 (RNPEQ), 58–59 (DQ), 79–81 (TNY), K102, K143, and 165–168 (YFEN). Residues 163–199 (PCYFENLLSYFLPQKAADGKSFLLDLPMGDVPMDGMS) form an interaction with ASS1 region.

Belongs to the NmrA-type oxidoreductase family. In terms of assembly, homodimer. Interacts with ASS1. Interaction is enhanced by low NADPH/NADP(+) ratios, which results in inhibition of ASS1 activity.

Its subcellular location is the cytoplasm. The protein resides in the perinuclear region. The protein localises to the nucleus. In terms of biological role, redox sensor protein. Undergoes restructuring and subcellular redistribution in response to changes in intracellular NADPH/NADP(+) levels. At low NADPH concentrations the protein is found mainly as a monomer, and binds argininosuccinate synthase (ASS1), the enzyme involved in nitric oxide synthesis. Association with ASS1 impairs its activity and reduces the production of nitric oxide, which subsecuently prevents apoptosis. Under normal NADPH concentrations, the protein is found as a dimer and hides the binding site for ASS1. The homodimer binds one molecule of NADPH. Has higher affinity for NADPH than for NADP(+). Binding to NADPH is necessary to form a stable dimer. In Mus musculus (Mouse), this protein is NmrA-like family domain-containing protein 1 (Nmral1).